Reading from the N-terminus, the 60-residue chain is Small, acid-soluble spore protein 1 (60 aa).

It belongs to the alpha/beta-type SASP family. SASP are degraded in the first minutes of spore germination and provide amino acids for both new protein synthesis and metabolism.

Its function is as follows. SASP are bound to spore DNA. They are double-stranded DNA-binding proteins that cause DNA to change to an a-like conformation. They protect the DNA backbone from chemical and enzymatic cleavage and are thus involved in dormant spore's high resistance to UV light. The sequence is that of Small, acid-soluble spore protein 1 (ssp1) from Clostridium perfringens (strain 13 / Type A).